Here is a 113-residue protein sequence, read N- to C-terminus: Class I hydrophobin POH3 (113 aa).

A signal peptide spans 1 to 21 (MFSRVIFCTFLILPLLAAATA). Intrachain disulfides connect C32–C92, C39–C86, C40–C73, and C93–C106. Residue N110 is glycosylated (N-linked (GlcNAc...) asparagine).

The protein belongs to the fungal hydrophobin family. In terms of assembly, self-assembles to form functional amyloid fibrils called rodlets. Self-assembly into fibrillar rodlets occurs spontaneously at hydrophobic:hydrophilic interfaces and the rodlets further associate laterally to form amphipathic monolayers. Expressionn is switched off in the fruiting bodies but abundantly expressed in the vegetative mycelium of both monokaryon and dikaryon.

Its subcellular location is the secreted. It is found in the cell wall. In terms of biological role, aerial growth, conidiation, and dispersal of filamentous fungi in the environment rely upon a capability of their secreting small amphipathic proteins called hydrophobins (HPBs) with low sequence identity. Class I can self-assemble into an outermost layer of rodlet bundles on aerial cell surfaces, conferring cellular hydrophobicity that supports fungal growth, development and dispersal; whereas Class II form highly ordered films at water-air interfaces through intermolecular interactions but contribute nothing to the rodlet structure. POH3 is a class I hydrophobin that causes a large drop in the water-surface tension, enabling hyphae to breach the interface and grow into the air, in both the primary and the secondary mycelium. In the latter mycelium POH3 maight also play a role in the emergence of fruiting bodies. Secreted POH3 could also play a role in facilitating lignin degradation. This Pleurotus ostreatus (Oyster mushroom) protein is Class I hydrophobin POH3.